The following is a 445-amino-acid chain: Bifunctional protein GlmU (445 aa).

The interval 1–218 (MRALVLAAGK…LLEITGVNTR (218 aa)) is pyrophosphorylase. UDP-N-acetyl-alpha-D-glucosamine-binding positions include 6–9 (LAAG), K20, Q69, 74–75 (GT), 96–98 (YGD), G134, E147, N162, and N216. D98 contributes to the Mg(2+) binding site. N216 is a binding site for Mg(2+). The segment at 219-239 (KTLVWLEEQLRMRKIEELLEN) is linker. Residues 240-445 (GVTILDPATT…GWVLKKRKEE (206 aa)) form an N-acetyltransferase region. Residues R321 and K339 each contribute to the UDP-N-acetyl-alpha-D-glucosamine site. Residue H351 is the Proton acceptor of the active site. Residues Y354 and N365 each contribute to the UDP-N-acetyl-alpha-D-glucosamine site. Acetyl-CoA is bound by residues A368, 374 to 375 (NY), S393, A411, and R428.

It in the N-terminal section; belongs to the N-acetylglucosamine-1-phosphate uridyltransferase family. In the C-terminal section; belongs to the transferase hexapeptide repeat family. Homotrimer. Requires Mg(2+) as cofactor.

The protein localises to the cytoplasm. It carries out the reaction alpha-D-glucosamine 1-phosphate + acetyl-CoA = N-acetyl-alpha-D-glucosamine 1-phosphate + CoA + H(+). The enzyme catalyses N-acetyl-alpha-D-glucosamine 1-phosphate + UTP + H(+) = UDP-N-acetyl-alpha-D-glucosamine + diphosphate. It participates in nucleotide-sugar biosynthesis; UDP-N-acetyl-alpha-D-glucosamine biosynthesis; N-acetyl-alpha-D-glucosamine 1-phosphate from alpha-D-glucosamine 6-phosphate (route II): step 2/2. It functions in the pathway nucleotide-sugar biosynthesis; UDP-N-acetyl-alpha-D-glucosamine biosynthesis; UDP-N-acetyl-alpha-D-glucosamine from N-acetyl-alpha-D-glucosamine 1-phosphate: step 1/1. The protein operates within bacterial outer membrane biogenesis; LPS lipid A biosynthesis. In terms of biological role, catalyzes the last two sequential reactions in the de novo biosynthetic pathway for UDP-N-acetylglucosamine (UDP-GlcNAc). The C-terminal domain catalyzes the transfer of acetyl group from acetyl coenzyme A to glucosamine-1-phosphate (GlcN-1-P) to produce N-acetylglucosamine-1-phosphate (GlcNAc-1-P), which is converted into UDP-GlcNAc by the transfer of uridine 5-monophosphate (from uridine 5-triphosphate), a reaction catalyzed by the N-terminal domain. The sequence is that of Bifunctional protein GlmU from Thermotoga petrophila (strain ATCC BAA-488 / DSM 13995 / JCM 10881 / RKU-1).